A 387-amino-acid chain; its full sequence is 3-ketoacyl-CoA thiolase (387 aa).

The active-site Acyl-thioester intermediate is cysteine 91. Catalysis depends on proton acceptor residues histidine 343 and cysteine 373.

The protein belongs to the thiolase-like superfamily. Thiolase family. Heterotetramer of two alpha chains (FadB) and two beta chains (FadA).

Its subcellular location is the cytoplasm. The enzyme catalyses an acyl-CoA + acetyl-CoA = a 3-oxoacyl-CoA + CoA. The protein operates within lipid metabolism; fatty acid beta-oxidation. Its function is as follows. Catalyzes the final step of fatty acid oxidation in which acetyl-CoA is released and the CoA ester of a fatty acid two carbons shorter is formed. In Yersinia pseudotuberculosis serotype O:1b (strain IP 31758), this protein is 3-ketoacyl-CoA thiolase.